A 245-amino-acid polypeptide reads, in one-letter code: uncharacterized protein (245 aa).

The region spanning 29-96 (RSLIEATFQR…AQRGFHVTPM (68 aa)) is the HTH gntR-type domain. The segment at residues 56 to 75 (IEDLKSRYEVSGGTVREALS) is a DNA-binding region (H-T-H motif).

This is an uncharacterized protein from Paraburkholderia xenovorans (strain LB400).